A 175-amino-acid chain; its full sequence is MFQTFISRHNSNFFSDKLVLTSVTPASSAPVLQTPKATSSTLYFDSLTVNAGNGGFLHCIQMDTSVNAANQVVSVGADIAFDADPKFFACLVRFESSSVPTTLPTAYDVYPLNGRHDGGYYTVKDCVTIDVLPRTPGNNVYVGFMVWSNFTATKCRGLVSLNQVIKEIICLQPLK.

It belongs to the microvirus G protein family. As to quaternary structure, pentamerizes and interacts with H protein, F and B pentamers to form 12S pre-assembly complex. Joining of twelve 12S complex form the procapsid.

Its subcellular location is the virion. It localises to the host cytoplasm. Its function is as follows. Attaches the circulating virion to the bacterial lipopolysaccharides which serve as receptor for the virus. Determines the phage host-range. Probably triggers with protein H the injection of the phage DNA into the host cytoplasm upon conformational changes induced by the interaction with host lipopolysaccharides. This Escherichia coli C (Isolate Sanger) protein is Major spike protein G (G).